The primary structure comprises 234 residues: MNMFASGTAALPLRASGVVVAPTVLAGGALSRVDQLKAQIRNPGEASFFYRDHHFQYDAVKVLPGEYFVSAEDLVIMTVLGSCISACIWDGRVRAGGMNHFMLPDGDSVDGFGRYGSYAMELLINELLKKGARRESMQAKVFGGAAVMAGFTTMNVGERNTKFVLDYLATERIPVVSQDVLDIHPRKVCFFPVTGKVLVKRLAHSHPETLAVEERKGNAATVAKATSGGSVDLF.

Belongs to the CheD family.

The catalysed reaction is L-glutaminyl-[protein] + H2O = L-glutamyl-[protein] + NH4(+). Its function is as follows. Probably deamidates glutamine residues to glutamate on methyl-accepting chemotaxis receptors (MCPs), playing an important role in chemotaxis. This chain is Probable chemoreceptor glutamine deamidase CheD 1, found in Albidiferax ferrireducens (strain ATCC BAA-621 / DSM 15236 / T118) (Rhodoferax ferrireducens).